We begin with the raw amino-acid sequence, 331 residues long: MQEEILYKWNYDDFKDKKFKIPKLNMPWDYKFSPYFEEISLENREWIKGTKLISEESDFEKFVYLKTILMNSYLYPHCNKEVFRYINRLNEYIYIVDDFYLEDNVKGQEWVDELFDRNSKFVKENYIGSIMWEIFDDIISVGNDGATDYLIKKTHEWMDSVILFNSKKVNSKFTFEEYTNSRGVDVGMIFGLACTKVHIPPLCDEIENHPVYIDMLANYYNPIHLLINDIYSFNKETKSVRLGNYVKIAAYQLGSIQLAMDHLSKLFDEYIGKIQEKFAELEKIFPNNKDLETHLYIIKTIIACNFNCSTNPNYPRYYGEVLEAELKIINE.

The DDxx(x)D/E motif motif lies at 97–102; the sequence is DDFYLE. The short motif at 228 to 236 is the NDxxSxxxD/E motif element; that stretch reads NDIYSFNKE.

It belongs to the terpene synthase family.

Its function is as follows. Terpene synthase that converts its substrate farnesyl diphosphate (FPP) into several yet unidentified sesquiterpenes. The chain is Terpene synthase 8 from Dictyostelium purpureum (Slime mold).